A 493-amino-acid polypeptide reads, in one-letter code: Probable cytochrome P450 CYP36A1 (493 aa).

3 consecutive transmembrane segments (helical) span residues methionine 1–alanine 21, glycine 60–leucine 80, and glutamine 290–leucine 310. Heme is bound at residue cysteine 440.

This sequence belongs to the cytochrome P450 family. Heme serves as cofactor.

It is found in the membrane. Functionally, cytochromes P450 are a group of heme-thiolate monooxygenases. They oxidize a variety of structurally unrelated compounds, including steroids, fatty acids, and xenobiotics. This is Probable cytochrome P450 CYP36A1 (cyp-36A1) from Caenorhabditis elegans.